Reading from the N-terminus, the 870-residue chain is DNA mismatch repair protein MutS (870 aa).

Position 617–624 (617–624) interacts with ATP; the sequence is GPNMAGKS.

This sequence belongs to the DNA mismatch repair MutS family.

Its function is as follows. This protein is involved in the repair of mismatches in DNA. It is possible that it carries out the mismatch recognition step. This protein has a weak ATPase activity. This chain is DNA mismatch repair protein MutS, found in Phocaeicola vulgatus (strain ATCC 8482 / DSM 1447 / JCM 5826 / CCUG 4940 / NBRC 14291 / NCTC 11154) (Bacteroides vulgatus).